A 40-amino-acid polypeptide reads, in one-letter code: Large ribosomal subunit protein bL36B (40 aa).

It belongs to the bacterial ribosomal protein bL36 family.

The protein is Large ribosomal subunit protein bL36B of Clavibacter michiganensis subsp. michiganensis (strain NCPPB 382).